The chain runs to 509 residues: MMLPKRNIIHFLRKRAIFIVAAFIALLTVDYSLNTIEITDSKSGPFSLNTPIEDIRLVECFSFSPFCRPVLEFWKWARTSRNLYRSRIPWKRAYLYVKRPALYIPGETVLVEQVYVDRQLEKRNKHGIQIRYGTDGDICEFNTLLGEDVVELREGWSAVLNDFIYLGQPVLLTQRPCETPPTPSIEALKRKELSSVTLTYDDEEKKTIKILQLSDLHYSNSDRPCRDPYPYETAEDCMADAKTTAFVNELLQLEEPDFVLLTGDLINGDTSRDARSSLMKAVSPFVDYNVPFAVNFGNHDDLGDLSREELAKILSQIPGSMGLIGNVSGVGNFVLHSPRKFAIYVLDTKGDTSNRRLCPGYDAITEDQLEWLSSKVADFKYEPIQMAVLHIPLKEFCETEDLVGAFREPCSYSICDPNTAKALKSLRIPLAIAGHDHVNDFCGIHPDYNTYFCFAGGAGFGGYGGHGGYVRRARVFELDPVERAVRTWKRLEWPPEDRKLMLDVQTILV.

The first 32 residues, 1–32 (MMLPKRNIIHFLRKRAIFIVAAFIALLTVDYS), serve as a signal peptide directing secretion.

It localises to the endoplasmic reticulum. This is an uncharacterized protein from Schizosaccharomyces pombe (strain 972 / ATCC 24843) (Fission yeast).